Here is a 157-residue protein sequence, read N- to C-terminus: Large ribosomal subunit protein uL15 (157 aa).

Over residues 1–13 the composition is skewed to basic and acidic residues; that stretch reads MKLNDLRDKDGAT. Residues 1–39 form a disordered region; the sequence is MKLNDLRDKDGATHSKKRLGRGIGSGSGKTAGRGVKGQK. The segment covering 21–35 has biased composition (gly residues); it reads RGIGSGSGKTAGRGV.

This sequence belongs to the universal ribosomal protein uL15 family. In terms of assembly, part of the 50S ribosomal subunit.

In terms of biological role, binds to the 23S rRNA. The chain is Large ribosomal subunit protein uL15 from Mesorhizobium japonicum (strain LMG 29417 / CECT 9101 / MAFF 303099) (Mesorhizobium loti (strain MAFF 303099)).